Here is a 324-residue protein sequence, read N- to C-terminus: THUMP domain-containing protein 1 homolog (324 aa).

2 disordered regions span residues 1-24 and 67-104; these read MEPASKKSKMGKNVKFNNNKKKYF and SEKPENEPEKKQPEEGAGGDAGEDDPKPAAGGTSDDDD. Positions 68–80 are enriched in basic and acidic residues; sequence EKPENEPEKKQPE. Thr99 is modified (phosphothreonine). A Phosphoserine modification is found at Ser100. One can recognise a THUMP domain in the interval 154-260; it reads DIATTGKSMS…RGWCLLSVID (107 aa). The segment at 275–324 is disordered; sequence NPSDKKSSGEGDSKSETSEVANGNDKEQAESSEESKSNDDENKDSTENDK. Basic and acidic residues-rich tracts occupy residues 277-291 and 298-324; these read SDKKSSGEGDSKSET and NDKEQAESSEESKSNDDENKDSTENDK.

Belongs to the THUMPD1 family.

The protein is THUMP domain-containing protein 1 homolog of Drosophila melanogaster (Fruit fly).